We begin with the raw amino-acid sequence, 428 residues long: Histone deacetylase 3 (428 aa).

A histone deacetylase region spans residues 3–316; it reads KTVAYFYDPD…WTYETSLLVE (314 aa). 3 residues coordinate 1D-myo-inositol 1,4,5,6-tetrakisphosphate: His17, Gly21, and Lys25. His135 is a catalytic residue. The Zn(2+) site is built by Asp170, His172, and Asp259. Arg265 contributes to the 1D-myo-inositol 1,4,5,6-tetrakisphosphate binding site. Composition is skewed to basic and acidic residues over residues 388-405 and 415-428; these read DRTD…ENYS and DGDH…DVEI. A disordered region spans residues 388 to 428; it reads DRTDEADAEERGPEENYSRPEAPNEFYDGDHDNDKESDVEI. Position 424 is a phosphoserine (Ser424).

The protein belongs to the histone deacetylase family. HD type 1 subfamily. As to quaternary structure, interacts with HDAC7 and HDAC9. Interacts with HDAC10, DAXX and DACH1. Found in a complex with NCOR1 and NCOR2. Component of the N-Cor repressor complex, at least composed of NCOR1, NCOR2, HDAC3, TBL1X, TBL1R, CORO2A and GPS2. Interacts with BCOR, MJD2A/JHDM3A, NRIP1, PRDM6 and SRY. Interacts with BTBD14B. Interacts with GLIS2. Interacts (via the DNA-binding domain) with NR2C1; the interaction recruits phosphorylated NR2C1 to PML bodies for sumoylation. Component of the Notch corepressor complex. Interacts with CBFA2T3 and NKAP. Interacts with APEX1; the interaction is not dependent on the acetylated status of APEX1. Interacts with and deacetylates MAPK14. Interacts with ZMYND15. Interacts with SMRT/NCOR2 and BCL6 on DNA enhancer elements. Interacts with INSM1. Interacts with XBP1; the interaction occurs in endothelial cell (EC) under disturbed flow. Interacts (via C-terminus) with CCAR2 (via N-terminus). Interacts with and deacetylates MEF2D. Interacts with BEND3. Interacts with NKAPL. Interacts with DHX36; this interaction occurs in a RNA-dependent manner. Interacts weakly with CRY1; this interaction is enhanced in the presence of FBXL3. Interacts with FBXL3 and BMAL1. Interacts with NCOR1. Interacts with RARA. Interacts with SETD5. In terms of processing, deubiquitinated on 'Lys-63'-linked ubiquitin chains by USP38; leading to a decreased level of histone acetylation. Post-translationally, sumoylated in vitro.

It localises to the nucleus. Its subcellular location is the chromosome. It is found in the cytoplasm. The protein localises to the cytosol. It carries out the reaction N(6)-acetyl-L-lysyl-[histone] + H2O = L-lysyl-[histone] + acetate. The catalysed reaction is N(6)-acetyl-L-lysyl-[protein] + H2O = L-lysyl-[protein] + acetate. It catalyses the reaction N(6)-(2E)-butenoyl-L-lysyl-[protein] + H2O = (2E)-2-butenoate + L-lysyl-[protein]. The enzyme catalyses N(6)-(2-hydroxyisobutanoyl)-L-lysyl-[protein] + H2O = 2-hydroxy-2-methylpropanoate + L-lysyl-[protein]. It carries out the reaction N(6)-[(S)-lactoyl]-L-lysyl-[protein] + H2O = (S)-lactate + L-lysyl-[protein]. Its activity is regulated as follows. Inositol tetraphosphate (1D-myo-inositol 1,4,5,6-tetrakisphosphate) promotes the histone deacetylase activity by acting as an intermolecular glue between HDAC3 and NCOR2, thereby promoting its association with the N-Cor complex, a prerequisite for the histone deacetylase activity. In terms of biological role, histone deacetylase that catalyzes the deacetylation of lysine residues on the N-terminal part of the core histones (H2A, H2B, H3 and H4), and some other non-histone substrates. Histone deacetylation gives a tag for epigenetic repression and plays an important role in transcriptional regulation, cell cycle progression and developmental events. Histone deacetylases act via the formation of large multiprotein complexes, such as N-Cor repressor complex, which activate the histone deacetylase activity. Participates in the BCL6 transcriptional repressor activity by deacetylating the H3 'Lys-27' (H3K27) on enhancer elements, antagonizing EP300 acetyltransferase activity and repressing proximal gene expression. Acts as a molecular chaperone for shuttling phosphorylated NR2C1 to PML bodies for sumoylation. Contributes, together with XBP1 isoform 1, to the activation of NFE2L2-mediated HMOX1 transcription factor gene expression in a PI(3)K/mTORC2/Akt-dependent signaling pathway leading to endothelial cell (EC) survival under disturbed flow/oxidative stress. Regulates both the transcriptional activation and repression phases of the circadian clock in a deacetylase activity-independent manner. During the activation phase, promotes the accumulation of ubiquitinated BMAL1 at the E-boxes and during the repression phase, blocks FBXL3-mediated CRY1/2 ubiquitination and promotes the interaction of CRY1 and BMAL1. The NCOR1-HDAC3 complex regulates the circadian expression of the core clock gene BMAL1 and the genes involved in lipid metabolism in the liver. Also functions as a deacetylase for non-histone targets, such as KAT5, MEF2D, MAPK14, RARA and STAT3. Serves as a corepressor of RARA, mediating its deacetylation and repression, leading to inhibition of RARE DNA element binding. In association with RARA, plays a role in the repression of microRNA-10a and thereby in the inflammatory response. In addition to protein deacetylase activity, also acts as a protein-lysine deacylase by recognizing other acyl groups: catalyzes removal of (2E)-butenoyl (crotonyl), lactoyl (lactyl) and 2-hydroxyisobutanoyl (2-hydroxyisobutyryl) acyl groups from lysine residues, leading to protein decrotonylation, delactylation and de-2-hydroxyisobutyrylation, respectively. Catalyzes decrotonylation of MAPRE1/EB1. Mediates delactylation NBN/NBS1, thereby inhibiting DNA double-strand breaks (DSBs) via homologous recombination (HR). This Pongo abelii (Sumatran orangutan) protein is Histone deacetylase 3 (HDAC3).